We begin with the raw amino-acid sequence, 379 residues long: F-box protein At1g67340 (379 aa).

In terms of domain architecture, F-box spans 41 to 92 (ADLLDSIPDDLVISILCKLGSTSRCPADFINVLLTCKRLKGLAMNPIVLSRL). Histidine 304, cysteine 307, cysteine 320, cysteine 323, cysteine 329, cysteine 333, histidine 342, and cysteine 346 together coordinate Zn(2+). Residues 304–346 (HAGCGRPETRKHEFRRCSVCGVVNYCSRACQALDWKLRHKMDC) form an MYND-type; atypical zinc finger. The tract at residues 358–379 (GGEGNVQIDGNGNGDNVLLPMS) is disordered.

In terms of assembly, part of a SCF (ASK-cullin-F-box) protein ligase complex. Interacts with SKP1A/ASK1, SKP1B/ASK2, ASK4, ASK11 and ASK13.

It is found in the nucleus. Its pathway is protein modification; protein ubiquitination. Its function is as follows. Component of SCF(ASK-cullin-F-box) E3 ubiquitin ligase complexes, which may mediate the ubiquitination and subsequent proteasomal degradation of target proteins. This chain is F-box protein At1g67340, found in Arabidopsis thaliana (Mouse-ear cress).